The following is a 283-amino-acid chain: Pantoate--beta-alanine ligase (283 aa).

The protein belongs to the pantothenate synthetase family.

It carries out the reaction (R)-pantoate + beta-alanine + ATP = (R)-pantothenate + AMP + diphosphate + H(+). Its pathway is cofactor biosynthesis; (R)-pantothenate biosynthesis; (R)-pantothenate from (R)-pantoate and beta-alanine: step 1/1. This chain is Pantoate--beta-alanine ligase (pan6), found in Schizosaccharomyces pombe (strain 972 / ATCC 24843) (Fission yeast).